Reading from the N-terminus, the 459-residue chain is Cysteine--tRNA ligase (459 aa).

Cys-28 contributes to the Zn(2+) binding site. The short motif at 30-40 is the 'HIGH' region element; sequence ITIYDYCHIGH. 3 residues coordinate Zn(2+): Cys-209, His-234, and Glu-238. The short motif at 266 to 270 is the 'KMSKS' region element; it reads KMSKS. An ATP-binding site is contributed by Lys-269.

The protein belongs to the class-I aminoacyl-tRNA synthetase family. Monomer. Requires Zn(2+) as cofactor.

The protein localises to the cytoplasm. It carries out the reaction tRNA(Cys) + L-cysteine + ATP = L-cysteinyl-tRNA(Cys) + AMP + diphosphate. The protein is Cysteine--tRNA ligase of Pseudoalteromonas translucida (strain TAC 125).